The following is a 121-amino-acid chain: Amelogenin (121 aa).

2 disordered regions span residues 1–20 (LHHQIIPVLSQQQTPTHALQ) and 32–121 (QPMQ…WPAT). Polar residues predominate over residues 48–58 (SVTPTQHHQSN). The span at 59–71 (LPQPAQQPFQPQV) shows a compositional bias: low complexity. Residues 85–111 (PAHPMPPMPQPPLPPMFPMQPLPPLLP) are compositionally biased toward pro residues.

This sequence belongs to the amelogenin family.

Its subcellular location is the secreted. It is found in the extracellular space. The protein localises to the extracellular matrix. Functionally, plays a role in the biomineralization of teeth. Seems to regulate the formation of crystallites during the secretory stage of tooth enamel development. Thought to play a major role in the structural organization and mineralization of developing enamel. The sequence is that of Amelogenin (AMEL) from Ornithorhynchus anatinus (Duckbill platypus).